The primary structure comprises 470 residues: Asparagine--tRNA ligase (470 aa).

This sequence belongs to the class-II aminoacyl-tRNA synthetase family. In terms of assembly, homodimer.

The protein localises to the cytoplasm. It catalyses the reaction tRNA(Asn) + L-asparagine + ATP = L-asparaginyl-tRNA(Asn) + AMP + diphosphate + H(+). The polypeptide is Asparagine--tRNA ligase (Blochmanniella pennsylvanica (strain BPEN)).